The chain runs to 215 residues: MFTIALPKGALLRDSISTFKRAGLDFSNALDENNRSLTFESNCKRAKALLVRNGDVPVYVSYGQADLGIVGYDVLRESELKVAKLLDLGFGGCHMSLAVKKNSNYSKPTDLPANCKVASKFIKTARSYFEELNIPVEIVHLTGSVELGPITGMAEAIVDLVATGKTLKENGLIKIDDLFYSTARLIGNPLSMRLDDNHLRDTILSIESTNSLIEE.

It belongs to the ATP phosphoribosyltransferase family. Short subfamily. As to quaternary structure, heteromultimer composed of HisG and HisZ subunits.

The protein localises to the cytoplasm. It catalyses the reaction 1-(5-phospho-beta-D-ribosyl)-ATP + diphosphate = 5-phospho-alpha-D-ribose 1-diphosphate + ATP. It participates in amino-acid biosynthesis; L-histidine biosynthesis; L-histidine from 5-phospho-alpha-D-ribose 1-diphosphate: step 1/9. In terms of biological role, catalyzes the condensation of ATP and 5-phosphoribose 1-diphosphate to form N'-(5'-phosphoribosyl)-ATP (PR-ATP). Has a crucial role in the pathway because the rate of histidine biosynthesis seems to be controlled primarily by regulation of HisG enzymatic activity. This is ATP phosphoribosyltransferase from Prochlorococcus marinus (strain MIT 9215).